Consider the following 289-residue polypeptide: Transmembrane protein 163 (289 aa).

Positions 1-65 (MEPAAGIQRR…ESGQFSDGLE (65 aa)) are disordered. The Cytoplasmic portion of the chain corresponds to 1–88 (MEPAAGIQRR…HEAQNYRKKA (88 aa)). S11 carries the post-translational modification Phosphoserine. Residues 16 to 36 (TVPPPPRGHAPPAAAPGPAPL) show a composition bias toward pro residues. Residues 42–72 (EPPQLEEERQVRISESGQFSDGLEDRGLLES) form a required for interaction with MCOLN1 region. Phosphoserine occurs at positions 55, 57, and 61. Residues 89–109 (LWVSWFSIIVTLALAVAAFTV) form a helical membrane-spanning segment. Over 110-116 (SVMRYSA) the chain is Extracellular. A helical transmembrane segment spans residues 117-137 (SAFGFAFDAILDVLSSAIVLW). The Cytoplasmic portion of the chain corresponds to 138–150 (RYSNAAAVHSAHR). The chain crosses the membrane as a helical span at residues 151–171 (EYIACVILGVIFLLSSICIVV). Residues 172 to 187 (KAIHDLSTRLLPEVDD) are Extracellular-facing. Residues 188 to 208 (FLFSVSILSGILCSILAVLKF) traverse the membrane as a helical segment. The Cytoplasmic segment spans residues 209–217 (MLGKVLTSR). A helical membrane pass occupies residues 218–238 (ALITDGFNSLVGGVMGFSILL). Residues 239–255 (SAEVFKHDSAVWYLDGS) lie on the Extracellular side of the membrane. A helical transmembrane segment spans residues 256–276 (IGVLIGLTIFAYGVKLLIDMV). The Cytoplasmic portion of the chain corresponds to 277 to 289 (PRVRQTRHYEMFE).

The protein belongs to the TMEM163 family. As to quaternary structure, homodimer. Interacts with MCOLN1/TRPML1. Interacts with SLC30A1, SLC30A2, SLC30A3 and SLC30A4. As to expression, widely expressed. High expression is detected in brain, lung and testis.

The protein resides in the cytoplasmic vesicle. Its subcellular location is the secretory vesicle. The protein localises to the synaptic vesicle membrane. It is found in the early endosome membrane. It localises to the late endosome membrane. The protein resides in the lysosome membrane. Its subcellular location is the cell membrane. It catalyses the reaction Zn(2+)(in) = Zn(2+)(out). In terms of biological role, zinc ion transporter that mediates zinc efflux and plays a crucial role in intracellular zinc homeostasis. Binds the divalent cations Zn(2+), Ni(2+), and to a minor extent Cu(2+). Is a functional modulator of P2X purinoceptors, including P2RX1, P2RX3, P2RX4 and P2RX7. Plays a role in central nervous system development and is required for myelination, and survival and proliferation of oligodendrocytes. The polypeptide is Transmembrane protein 163 (TMEM163) (Homo sapiens (Human)).